The sequence spans 314 residues: Olfactory receptor 5I1 (314 aa).

At 1–27 the chain is on the extracellular side; that stretch reads MEFTDRNYTLVTEFILLGFPTRPELQI. N-linked (GlcNAc...) asparagine glycosylation occurs at Asn-7. Residues 28–48 form a helical membrane-spanning segment; it reads VLFLMFLTLYAIILIGNIGLM. The Cytoplasmic portion of the chain corresponds to 49–56; sequence LLIRIDPH. Residues 57–77 traverse the membrane as a helical segment; sequence LQTPMYFFLSNLSFVDLCYFS. Topologically, residues 78 to 101 are extracellular; sequence DIVPKMLVNFLSENKSISYYGCAL. Cys-99 and Cys-191 are disulfide-bonded. Residues 102–122 form a helical membrane-spanning segment; sequence QFYFFCTFADTESFILAAMAY. At 123–141 the chain is on the cytoplasmic side; that stretch reads DRYVAICNPLLYTVVMSRG. A helical membrane pass occupies residues 142 to 162; the sequence is ICMRLIVLSYLGGNMSSLVHT. The Extracellular segment spans residues 163-198; it reads SFAFILKYCDKNVINHFFCDLPPLLKLSCTDTTINE. Residues 199-219 traverse the membrane as a helical segment; the sequence is WLLSTYGSSVEIICFIIIIIS. Over 220–239 the chain is Cytoplasmic; that stretch reads YFFILLSVLKIRSFSGRKKT. A helical transmembrane segment spans residues 240 to 260; sequence FSTCASHLTSVTIYQGTLLFI. At 261 to 273 the chain is on the extracellular side; sequence YSRPSYLYSPNTD. A helical transmembrane segment spans residues 274-294; sequence KIISVFYTIFIPVLNPLIYSL. Residues 295–314 are Cytoplasmic-facing; the sequence is RNKDVKDAAEKVLRSKVDSS.

Belongs to the G-protein coupled receptor 1 family.

The protein resides in the cell membrane. Its function is as follows. Odorant receptor. The chain is Olfactory receptor 5I1 (OR5I1) from Homo sapiens (Human).